We begin with the raw amino-acid sequence, 346 residues long: Cyclin-dependent kinase 20 (346 aa).

Positions 4–288 (YCILGRIGEG…ASKALLHQYF (285 aa)) constitute a Protein kinase domain. Residues 10-18 (IGEGAHGIV) and lysine 33 each bind ATP. Aspartate 127 (proton acceptor) is an active-site residue.

The protein belongs to the protein kinase superfamily. CMGC Ser/Thr protein kinase family. CDC2/CDKX subfamily. Monomer. Interacts with TBC1D32 and MAK.

It localises to the nucleus. The protein localises to the cytoplasm. It is found in the cell projection. The protein resides in the cilium. The catalysed reaction is L-seryl-[protein] + ATP = O-phospho-L-seryl-[protein] + ADP + H(+). The enzyme catalyses L-threonyl-[protein] + ATP = O-phospho-L-threonyl-[protein] + ADP + H(+). Its function is as follows. Required for high-level Shh responses in the developing neural tube. Together with TBC1D32, controls the structure of the primary cilium by coordinating assembly of the ciliary membrane and axoneme, allowing GLI2 to be properly activated in response to SHH signaling. Involved in cell growth. Activates CDK2, a kinase involved in the control of the cell cycle, by phosphorylating residue 'Thr-160'. In Pongo abelii (Sumatran orangutan), this protein is Cyclin-dependent kinase 20 (CDK20).